A 364-amino-acid chain; its full sequence is Protein IncC (364 aa).

Composition is skewed to basic and acidic residues over residues 1 to 10 (MGVIHEETAY), 26 to 42 (ADHRDSAGRLSRWEATG), and 89 to 100 (HRPEVGSGRQEK). 2 disordered regions span residues 1 to 63 (MGVI…ASRV) and 75 to 102 (VRAGNGGSAGTSGVHRPEVGSGRQEKTG).

This sequence belongs to the ParA family.

Functionally, this is one of the proteins encoded by the trfB operon; it is involved in plasmid maintenance and replication. The protein is Protein IncC (incC) of Escherichia coli.